The primary structure comprises 416 residues: E3 ubiquitin-protein ligase RNFT1 (416 aa).

Disordered stretches follow at residues 1–50 (MKHR…MSLP) and 68–117 (DLSS…DSRE). A compositionally biased stretch (basic and acidic residues) spans 7–19 (HERQSSTESKNLK). Polar residues-rich tracts occupy residues 20–45 (ETTQ…SPSA) and 68–80 (DLSS…VARS). Residues 81–100 (NSRRVRPSTHGRSPSRHGHT) show a composition bias toward basic residues. The next 6 membrane-spanning stretches (helical) occupy residues 146 to 166 (LVVQ…TFLY), 184 to 204 (LQCL…YYTF), 214 to 234 (VFMN…VVGI), 237 to 257 (FIGK…PSFV), 265 to 287 (YWYM…PVWF), and 302 to 322 (WHFG…IIFG). Residues 349 to 400 (CSEADGMCAICQAEFTKPIALICQHVFCEECISSWFNKEKTCPLCRTLISNH) form a required for ubiquitin ligase activity and for protection against ER stress-induced cell death region. The segment at 356-394 (CAICQAEFTKPIALICQHVFCEECISSWFNKEKTCPLCR) adopts an RING-type zinc-finger fold.

Its subcellular location is the endoplasmic reticulum membrane. It carries out the reaction S-ubiquitinyl-[E2 ubiquitin-conjugating enzyme]-L-cysteine + [acceptor protein]-L-lysine = [E2 ubiquitin-conjugating enzyme]-L-cysteine + N(6)-ubiquitinyl-[acceptor protein]-L-lysine.. The protein operates within protein modification; protein ubiquitination. Its function is as follows. E3 ubiquitin-protein ligase that acts in the endoplasmic reticulum (ER)-associated degradation (ERAD) pathway, which targets misfolded proteins that accumulate in the endoplasmic reticulum (ER) for ubiquitination and subsequent proteasome-mediated degradation. Protects cells from ER stress-induced apoptosis. This Xenopus laevis (African clawed frog) protein is E3 ubiquitin-protein ligase RNFT1 (rnft1).